The primary structure comprises 206 residues: Large ribosomal subunit protein uL4 (206 aa).

The disordered stretch occupies residues 63–98 (MYRQKGTGRARHSSARAPQFRGGGKAHGPVPHSHAH). The segment covering 64-76 (YRQKGTGRARHSS) has biased composition (basic residues).

It belongs to the universal ribosomal protein uL4 family. As to quaternary structure, part of the 50S ribosomal subunit.

In terms of biological role, one of the primary rRNA binding proteins, this protein initially binds near the 5'-end of the 23S rRNA. It is important during the early stages of 50S assembly. It makes multiple contacts with different domains of the 23S rRNA in the assembled 50S subunit and ribosome. Its function is as follows. Forms part of the polypeptide exit tunnel. The sequence is that of Large ribosomal subunit protein uL4 from Chelativorans sp. (strain BNC1).